The primary structure comprises 469 residues: Fe(3+)-Zn(2+) purple acid phosphatase 12 (469 aa).

Positions 1-28 (MSSRSDLKIKRVSLIIFLLSVLVEFCYG) are cleaved as a signal peptide. An N-linked (GlcNAc...) asparagine glycan is attached at asparagine 114. Aspartate 168 is a binding site for Fe cation. Asparagine 176 carries an N-linked (GlcNAc...) asparagine glycan. 2 residues coordinate Fe cation: aspartate 197 and tyrosine 200. Aspartate 197 is a Zn(2+) binding site. Asparagine 234 lines the Zn(2+) pocket. A substrate-binding site is contributed by asparagine 234. Asparagine 307 carries an N-linked (GlcNAc...) asparagine glycan. Residue histidine 319 coordinates Zn(2+). The active-site Proton donor is histidine 329. Histidine 356 is a Zn(2+) binding site. Position 356-358 (356-358 (HVH)) interacts with substrate. Histidine 358 contacts Fe cation. N-linked (GlcNAc...) asparagine glycosylation occurs at asparagine 429.

The protein belongs to the metallophosphoesterase superfamily. Purple acid phosphatase family. As to quaternary structure, homodimer; disulfide-linked. The cofactor is Fe cation. Requires Zn(2+) as cofactor. As to expression, expressed in roots, stems, leaves, flowers and siliques.

The protein localises to the secreted. The catalysed reaction is a phosphate monoester + H2O = an alcohol + phosphate. This is Fe(3+)-Zn(2+) purple acid phosphatase 12 (PAP12) from Arabidopsis thaliana (Mouse-ear cress).